The following is a 97-amino-acid chain: Small cell adhesion glycoprotein (97 aa).

Residues 1 to 36 (MNNLPATPSPEELMTTPVFQAPETLSPQAEEASTAL) are Extracellular-facing. O-linked (GalNAc...) threonine glycosylation is present at Thr-7. The O-linked (GalNAc...) serine glycan is linked to Ser-9. O-linked (GalNAc...) threonine glycans are attached at residues Thr-15, Thr-16, and Thr-24. An O-linked (GalNAc...) serine glycan is attached at Ser-26. Residues 37–57 (IAVVITVVFLTLLSVVTLIFF) traverse the membrane as a helical; Signal-anchor for type III membrane protein segment. The Cytoplasmic portion of the chain corresponds to 58–97 (HLYKNKGSYVTYEPAEGEPSAILQMETDSAKGREKEEYFI).

Belongs to the SMAGP family. In terms of processing, O-glycosylated. The O-glycan is modified with sialic acid residues.

The protein localises to the cell membrane. It localises to the cytoplasmic vesicle membrane. Functionally, may play a role in epithelial cell-cell contacts. May play a role in tumor invasiveness and metastasis formation. The protein is Small cell adhesion glycoprotein (Smagp) of Mus musculus (Mouse).